The sequence spans 180 residues: Threonylcarbamoyl-AMP synthase (180 aa).

The 180-residue stretch at 1–180 (MRARALQHFL…DLITGAIVRP (180 aa)) folds into the YrdC-like domain.

It belongs to the SUA5 family. TsaC subfamily.

Its subcellular location is the cytoplasm. The catalysed reaction is L-threonine + hydrogencarbonate + ATP = L-threonylcarbamoyladenylate + diphosphate + H2O. Functionally, required for the formation of a threonylcarbamoyl group on adenosine at position 37 (t(6)A37) in tRNAs that read codons beginning with adenine. Catalyzes the conversion of L-threonine, HCO(3)(-)/CO(2) and ATP to give threonylcarbamoyl-AMP (TC-AMP) as the acyladenylate intermediate, with the release of diphosphate. This is Threonylcarbamoyl-AMP synthase from Methylobacillus flagellatus (strain ATCC 51484 / DSM 6875 / VKM B-1610 / KT).